The following is a 167-amino-acid chain: Leptin (167 aa).

The N-terminal stretch at 1-21 (MRCGPLCRFLWLWPYLSCVEA) is a signal peptide. The cysteines at positions 117 and 167 are disulfide-linked.

Belongs to the leptin family.

It is found in the secreted. Key player in the regulation of energy balance and body weight control. Once released into the circulation, has central and peripheral effects by binding LEPR, found in many tissues, which results in the activation of several major signaling pathways. In the hypothalamus, acts as an appetite-regulating factor that induces a decrease in food intake and an increase in energy consumption by inducing anorexinogenic factors and suppressing orexigenic neuropeptides, also regulates bone mass and secretion of hypothalamo-pituitary-adrenal hormones. In the periphery, increases basal metabolism, influences reproductive function, regulates pancreatic beta-cell function and insulin secretion, is pro-angiogenic for endothelial cell and affects innate and adaptive immunity. In the arcuate nucleus of the hypothalamus, activates by depolarization POMC neurons inducing FOS and SOCS3 expression to release anorexigenic peptides and inhibits by hyperpolarization NPY neurons inducing SOCS3 with a consequent reduction on release of orexigenic peptides. In addition to its known satiety inducing effect, has a modulatory role in nutrient absorption. In the intestine, reduces glucose absorption by enterocytes by activating PKC and leading to a sequential activation of p38, PI3K and ERK signaling pathways which exerts an inhibitory effect on glucose absorption. Acts as a growth factor on certain tissues, through the activation of different signaling pathways increases expression of genes involved in cell cycle regulation such as CCND1, via JAK2-STAT3 pathway, or VEGFA, via MAPK1/3 and PI3K-AKT1 pathways. May also play an apoptotic role via JAK2-STAT3 pathway and up-regulation of BIRC5 expression. Pro-angiogenic, has mitogenic activity on vascular endothelial cells and plays a role in matrix remodeling by regulating the expression of matrix metalloproteinases (MMPs) and tissue inhibitors of metalloproteinases (TIMPs). In innate immunity, modulates the activity and function of neutrophils by increasing chemotaxis and the secretion of oxygen radicals. Increases phagocytosis by macrophages and enhances secretion of pro-inflammatory mediators. Increases cytotoxic ability of NK cells. Plays a pro-inflammatory role, in synergy with IL1B, by inducing NOS2 which promotes the production of IL6, IL8 and Prostaglandin E2, through a signaling pathway that involves JAK2, PI3K, MAP2K1/MEK1 and MAPK14/p38. In adaptive immunity, promotes the switch of memory T-cells towards T helper-1 cell immune responses. Increases CD4(+)CD25(-) T-cell proliferation and reduces autophagy during TCR (T-cell receptor) stimulation, through MTOR signaling pathway activation and BCL2 up-regulation. In Canis lupus familiaris (Dog), this protein is Leptin (LEP).